The primary structure comprises 1447 residues: ATP-dependent helicase SGS1 (1447 aa).

Disordered regions lie at residues 37–78 (IANK…TATK), 243–264 (KKDG…QDDN), 342–430 (KEGA…EEKE), 552–572 (KENE…LSDS), and 601–639 (TERK…FDDD). Positions 59-78 (GTTNFITSIPASGPTNTATK) are enriched in polar residues. The segment covering 243-253 (KKDGMSKDQSK) has biased composition (basic and acidic residues). The segment covering 254 to 264 (GRSQVSSQDDN) has biased composition (polar residues). The span at 363-386 (ELTRRRNMRSREPVNYRIPDRDDP) shows a compositional bias: basic and acidic residues. 2 stretches are compositionally biased toward acidic residues: residues 403–415 (EREE…EAED) and 552–561 (KENEDFEEDN). Basic and acidic residues predominate over residues 601 to 611 (TERKLTGDNEH). The Helicase ATP-binding domain occupies 687–864 (VNATLQGKDV…IHNLELKEPV (178 aa)). 714–721 (AVVKSGKT) is a binding site for ATP. The short motif at 808-811 (DEAH) is the DEAH box element. In terms of domain architecture, Helicase C-terminal spans 886-1035 (TIFEICDAVK…NKEKHLNKLQ (150 aa)). The 80-residue stretch at 1272–1351 (LNNLRMTYER…ADLSKKRSSE (80 aa)) folds into the HRDC domain. The segment covering 1402–1411 (QIRQSQLPKN) has biased composition (polar residues). Residues 1402-1447 (QIRQSQLPKNTTSSKSGTRSISKSSKKSANGRRGFRNYRGHYRGRK) form a disordered region. Over residues 1412-1424 (TTSSKSGTRSISK) the composition is skewed to low complexity. Over residues 1425-1447 (SSKKSANGRRGFRNYRGHYRGRK) the composition is skewed to basic residues.

It belongs to the helicase family. RecQ subfamily. In terms of assembly, heterodimer with TOP3. Forms a complex with TOP3 and RMI1. Forms a ternary complex with a MLH1-MLH3 heterodimer (MutLbeta) during meiosis. Interacts with TOP2. The cofactor is Mg(2+).

It localises to the nucleus. The protein resides in the nucleolus. It carries out the reaction Couples ATP hydrolysis with the unwinding of duplex DNA by translocating in the 3'-5' direction.. The catalysed reaction is ATP + H2O = ADP + phosphate + H(+). With respect to regulation, helicase activity on G-quadruplex DNA is inhibited by ATP-gamma-S. Its function is as follows. ATP-dependent 3'-5' DNA helicase able to unwind duplex DNA or DNA:RNA heteroduplex. Unwinds G-quadruplex DNA; unwinding occurs in the 3'-5' direction, requires a 3' single-stranded end of at least 7 nucleotides. Helicase activity is higher on G-quadruplex substrates than on duplex DNA substrates. Assayed with a catalytic fragment (residues 400-1268). Telomeres and rDNA are notably G-rich; formation of G-quadruplex DNA would block DNA replication and transcription. Acts as an integral component of the S-phase checkpoint response, which arrests cells due to DNA damage or blocked fork progression during DNA replication. Can create a deleterious topological substrate that TOP3 preferentially resolves. The TOP3-SGS1 protein complex may function as a eukaryotic reverse gyrase introducing positive supercoils into extrachromosomal ribosomal DNA rings. Together with topoisomerase II has a role in chromosomal segregation. Maintains rDNA structure where it has a role in re-starting stalled replication forks. This Saccharomyces cerevisiae (strain ATCC 204508 / S288c) (Baker's yeast) protein is ATP-dependent helicase SGS1.